The following is a 462-amino-acid chain: tRNA modification GTPase MnmE (462 aa).

Arg26, Glu91, and Arg130 together coordinate (6S)-5-formyl-5,6,7,8-tetrahydrofolate. A TrmE-type G domain is found at 228–382; sequence GLSTAKIGRP…IEERINDIFF (155 aa). Asn238 lines the K(+) pocket. GTP contacts are provided by residues 238–243, 257–263, and 282–285; these read NVGKSQ, TDIEGTT, and DTAG. Ser242 provides a ligand contact to Mg(2+). K(+) is bound by residues Thr257, Ile259, and Thr262. Thr263 lines the Mg(2+) pocket. Position 462 (Lys462) interacts with (6S)-5-formyl-5,6,7,8-tetrahydrofolate.

It belongs to the TRAFAC class TrmE-Era-EngA-EngB-Septin-like GTPase superfamily. TrmE GTPase family. As to quaternary structure, homodimer. Heterotetramer of two MnmE and two MnmG subunits. It depends on K(+) as a cofactor.

It localises to the cytoplasm. Its function is as follows. Exhibits a very high intrinsic GTPase hydrolysis rate. Involved in the addition of a carboxymethylaminomethyl (cmnm) group at the wobble position (U34) of certain tRNAs, forming tRNA-cmnm(5)s(2)U34. The chain is tRNA modification GTPase MnmE from Streptococcus agalactiae.